The following is a 215-amino-acid chain: Octanoyltransferase (215 aa).

In terms of domain architecture, BPL/LPL catalytic spans 31 to 206 (PDSQDEIWLV…QLVKHLDYAE (176 aa)). Substrate is bound by residues 70-77 (RGGQVTYH), 137-139 (SLG), and 150-152 (GLA). Cysteine 168 functions as the Acyl-thioester intermediate in the catalytic mechanism.

Belongs to the LipB family.

It localises to the cytoplasm. The catalysed reaction is octanoyl-[ACP] + L-lysyl-[protein] = N(6)-octanoyl-L-lysyl-[protein] + holo-[ACP] + H(+). It participates in protein modification; protein lipoylation via endogenous pathway; protein N(6)-(lipoyl)lysine from octanoyl-[acyl-carrier-protein]: step 1/2. Its function is as follows. Catalyzes the transfer of endogenously produced octanoic acid from octanoyl-acyl-carrier-protein onto the lipoyl domains of lipoate-dependent enzymes. Lipoyl-ACP can also act as a substrate although octanoyl-ACP is likely to be the physiological substrate. The chain is Octanoyltransferase from Pseudomonas putida (strain ATCC 700007 / DSM 6899 / JCM 31910 / BCRC 17059 / LMG 24140 / F1).